Here is a 159-residue protein sequence, read N- to C-terminus: Putative ribosomal RNA large subunit methyltransferase H (159 aa).

Residues L76, G108, and F127–F132 each bind S-adenosyl-L-methionine.

The protein belongs to the RNA methyltransferase RlmH family.

It localises to the cytoplasm. It catalyses the reaction pseudouridine(1915) in 23S rRNA + S-adenosyl-L-methionine = N(3)-methylpseudouridine(1915) in 23S rRNA + S-adenosyl-L-homocysteine + H(+). In terms of biological role, specifically methylates the pseudouridine at position 1915 (m3Psi1915) in 23S rRNA. The sequence is that of Putative ribosomal RNA large subunit methyltransferase H from Methanococcus maripaludis (strain C6 / ATCC BAA-1332).